The following is a 532-amino-acid chain: Autophagy-related protein 21 (532 aa).

WD repeat units follow at residues 265-310 and 321-360; these read AHDS…KPFN and HNIA…HESF. The short motif at 317 to 321 is the L/FRRG motif element; that stretch reads LRRGH. Residues 360-380 form a disordered region; it reads FEYEEDPANESDPDDEDRSSE. The span at 361 to 378 shows a compositional bias: acidic residues; the sequence is EYEEDPANESDPDDEDRS.

Belongs to the WD repeat PROPPIN family.

The protein resides in the cytoplasm. The protein localises to the membrane. It localises to the vacuole membrane. Required for cytoplasm to vacuole transport (Cvt) vesicles formation and mitophagy. Involved in binding of phosphatidylethanolamine to ATG8 and in recruitment of ATG8 and ATG5 to the pre-autophagosomal structure. Protects ATG8 from ARG4-mediated cleavage. The sequence is that of Autophagy-related protein 21 (ATG21) from Debaryomyces hansenii (strain ATCC 36239 / CBS 767 / BCRC 21394 / JCM 1990 / NBRC 0083 / IGC 2968) (Yeast).